An 87-amino-acid chain; its full sequence is Small ribosomal subunit protein eS21 (87 aa).

This sequence belongs to the eukaryotic ribosomal protein eS21 family. Component of the small ribosomal subunit. Mature ribosomes consist of a small (40S) and a large (60S) subunit. The 40S subunit contains about 33 different proteins and 1 molecule of RNA (18S). The 60S subunit contains about 49 different proteins and 3 molecules of RNA (25S, 5.8S and 5S).

It localises to the cytoplasm. Its function is as follows. Required for the processing of the 20S rRNA-precursor to mature 18S rRNA in a late step of the maturation of 40S ribosomal subunits. Has a physiological role leading to 18S rRNA stability. The protein is Small ribosomal subunit protein eS21 (RPS21) of Kluyveromyces lactis (strain ATCC 8585 / CBS 2359 / DSM 70799 / NBRC 1267 / NRRL Y-1140 / WM37) (Yeast).